The sequence spans 707 residues: Casein kinase 1-like protein HD16 (707 aa).

The tract at residues 19–67 (YDVQDADPAASPVSPAPRGRTGRRGGAAAGRGNKTVAEGGGRKALKPRG) is disordered. Positions 24–37 (ADPAASPVSPAPRG) are enriched in low complexity. Residues 147-425 (YITDRKLGKG…KLISLFDGLI (279 aa)) form the Protein kinase domain. Residues 153–161 (LGKGGFGQV) and K184 each bind ATP. D276 acts as the Proton acceptor in catalysis.

This sequence belongs to the protein kinase superfamily. CK1 Ser/Thr protein kinase family. Casein kinase I subfamily. In terms of assembly, monomer. Interacts with GHD7 (via C-terminus). Interacts with SLR1. Autophosphorylated. In terms of tissue distribution, expressed in roots, leaves and stems. Expressed in leaf vascular bundles, and proximal regions of the shoot and roots.

The protein resides in the cytoplasm. It is found in the nucleus. The enzyme catalyses L-seryl-[protein] + ATP = O-phospho-L-seryl-[protein] + ADP + H(+). It carries out the reaction L-threonyl-[protein] + ATP = O-phospho-L-threonyl-[protein] + ADP + H(+). Its function is as follows. Casein kinases are operationally defined by their preferential utilization of acidic proteins such as caseins as substrates. It can phosphorylate a large number of proteins. Can phosphorylate casein on threonine residues in vitro. Involved in the regulation of flowering time through gibberellin (GA) signaling, and independently of photoperiod. Phosphorylates the DELLA protein SLR1, stabilizing SLR1 protein and sustaining SLR1 activity as repressor of GA signaling. Required for normal development of male floral organs and grains, through modulation of GA signaling. Targeted and repressed by the homeobox protein HAZ1 during GA signaling. Can phosphorylate phosvitin and SLR1 in vitro. Is not required for clock function in either the presence or the absence of light signals. Involved in a genetic control pathway for photoperiodic flowering under long day (LD) conditions that includes HD1, GHD7, HD5 and HD2. Phosphorylates and activates GHD7, a major floral repressor under LD conditions. Phosphorylation of GHD7 enhances its function in the repression of EHD1, HD3A and HD3B/RFT1, and obviously delaying flowering. In Oryza sativa subsp. japonica (Rice), this protein is Casein kinase 1-like protein HD16.